A 382-amino-acid chain; its full sequence is Porin-like protein BU359 (382 aa).

The N-terminal stretch at 1–23 (MTNRKSLAMVIPMLLAASNGVNA) is a signal peptide.

The protein belongs to the Gram-negative porin family. Homotrimer.

The protein resides in the cell outer membrane. In terms of biological role, forms pores that allow passive diffusion of small molecules across the membrane. This Buchnera aphidicola subsp. Acyrthosiphon pisum (strain APS) (Acyrthosiphon pisum symbiotic bacterium) protein is Porin-like protein BU359.